We begin with the raw amino-acid sequence, 222 residues long: Probable nicotinate-nucleotide adenylyltransferase (222 aa).

It belongs to the NadD family.

It carries out the reaction nicotinate beta-D-ribonucleotide + ATP + H(+) = deamido-NAD(+) + diphosphate. It functions in the pathway cofactor biosynthesis; NAD(+) biosynthesis; deamido-NAD(+) from nicotinate D-ribonucleotide: step 1/1. Functionally, catalyzes the reversible adenylation of nicotinate mononucleotide (NaMN) to nicotinic acid adenine dinucleotide (NaAD). This is Probable nicotinate-nucleotide adenylyltransferase from Xylella fastidiosa (strain M23).